Reading from the N-terminus, the 150-residue chain is MAPKAEKKPAAKKPAEEEPAAEKAPAGKKPKAEKRVPAGKSAGKEGGEGKRGRKKGKKSVETYKIYIFKVLKQVHPDIGISSKAMSIMNSFINDIFEKLAAEAAKLARYNKKPTITSREIQTSVRLVLPGELAKHAVSEGTKAVTKFTSS.

A compositionally biased stretch (basic and acidic residues) spans 1-16 (MAPKAEKKPAAKKPAE). Residues 1–57 (MAPKAEKKPAAKKPAEEEPAAEKAPAGKKPKAEKRVPAGKSAGKEGGEGKRGRKKGK) are disordered. 2 positions are modified to N6-acetyllysine: lysine 7 and lysine 34. Lysine 146 participates in a covalent cross-link: Glycyl lysine isopeptide (Lys-Gly) (interchain with G-Cter in ubiquitin).

It belongs to the histone H2B family. As to quaternary structure, the nucleosome is a histone octamer containing two molecules each of H2A, H2B, H3 and H4 assembled in one H3-H4 heterotetramer and two H2A-H2B heterodimers. The octamer wraps approximately 147 bp of DNA. Can be acetylated to form H2BK6ac and H2BK33ac. In terms of processing, monoubiquitinated to form H2BK143ub1; may give a specific tag for epigenetic transcriptional activation.

It localises to the nucleus. The protein resides in the chromosome. Core component of nucleosome. Nucleosomes wrap and compact DNA into chromatin, limiting DNA accessibility to the cellular machineries which require DNA as a template. Histones thereby play a central role in transcription regulation, DNA repair, DNA replication and chromosomal stability. DNA accessibility is regulated via a complex set of post-translational modifications of histones, also called histone code, and nucleosome remodeling. This is Histone H2B.2 from Zea mays (Maize).